Here is a 229-residue protein sequence, read N- to C-terminus: Aspartate-rich protein 1 (229 aa).

The interval 84-106 (SEEDNDDAKILPSPVQGSSEDNL) is disordered.

In Homo sapiens (Human), this protein is Aspartate-rich protein 1 (DRICH1).